Reading from the N-terminus, the 238-residue chain is Adapter protein MecA (238 aa).

Over residues 120–136 (QQQKDNKQNQDQNERNR) the composition is skewed to basic and acidic residues. Residues 120–139 (QQQKDNKQNQDQNERNRQNT) form a disordered region.

It belongs to the MecA family. As to quaternary structure, homodimer.

Its function is as follows. Enables the recognition and targeting of unfolded and aggregated proteins to the ClpC protease or to other proteins involved in proteolysis. This is Adapter protein MecA from Staphylococcus saprophyticus subsp. saprophyticus (strain ATCC 15305 / DSM 20229 / NCIMB 8711 / NCTC 7292 / S-41).